Here is a 230-residue protein sequence, read N- to C-terminus: Cytochrome c oxidase subunit 2 (230 aa).

At 1-14 (MAHPTQLGFKDAAM) the chain is on the mitochondrial intermembrane side. The helical transmembrane segment at 15–45 (PVMEELLHFHDHALMIVLLISTLVLYIITAM) threads the bilayer. The Mitochondrial matrix segment spans residues 46–59 (VSTKLTNKYILDSQ). A helical membrane pass occupies residues 60 to 87 (EIEIVWTILPAVILVLIALPSLRILYLM). Residues 88–230 (DEINDPHLTI…NWSSLMLEDA (143 aa)) are Mitochondrial intermembrane-facing. Positions 161, 196, 198, 200, 204, and 207 each coordinate Cu cation. Residue E198 coordinates Mg(2+).

The protein belongs to the cytochrome c oxidase subunit 2 family. As to quaternary structure, component of the cytochrome c oxidase (complex IV, CIV), a multisubunit enzyme composed of 14 subunits. The complex is composed of a catalytic core of 3 subunits MT-CO1, MT-CO2 and MT-CO3, encoded in the mitochondrial DNA, and 11 supernumerary subunits COX4I, COX5A, COX5B, COX6A, COX6B, COX6C, COX7A, COX7B, COX7C, COX8 and NDUFA4, which are encoded in the nuclear genome. The complex exists as a monomer or a dimer and forms supercomplexes (SCs) in the inner mitochondrial membrane with NADH-ubiquinone oxidoreductase (complex I, CI) and ubiquinol-cytochrome c oxidoreductase (cytochrome b-c1 complex, complex III, CIII), resulting in different assemblies (supercomplex SCI(1)III(2)IV(1) and megacomplex MCI(2)III(2)IV(2)). Found in a complex with TMEM177, COA6, COX18, COX20, SCO1 and SCO2. Interacts with TMEM177 in a COX20-dependent manner. Interacts with COX20. Interacts with COX16. The cofactor is Cu cation.

The protein resides in the mitochondrion inner membrane. It carries out the reaction 4 Fe(II)-[cytochrome c] + O2 + 8 H(+)(in) = 4 Fe(III)-[cytochrome c] + 2 H2O + 4 H(+)(out). Functionally, component of the cytochrome c oxidase, the last enzyme in the mitochondrial electron transport chain which drives oxidative phosphorylation. The respiratory chain contains 3 multisubunit complexes succinate dehydrogenase (complex II, CII), ubiquinol-cytochrome c oxidoreductase (cytochrome b-c1 complex, complex III, CIII) and cytochrome c oxidase (complex IV, CIV), that cooperate to transfer electrons derived from NADH and succinate to molecular oxygen, creating an electrochemical gradient over the inner membrane that drives transmembrane transport and the ATP synthase. Cytochrome c oxidase is the component of the respiratory chain that catalyzes the reduction of oxygen to water. Electrons originating from reduced cytochrome c in the intermembrane space (IMS) are transferred via the dinuclear copper A center (CU(A)) of subunit 2 and heme A of subunit 1 to the active site in subunit 1, a binuclear center (BNC) formed by heme A3 and copper B (CU(B)). The BNC reduces molecular oxygen to 2 water molecules using 4 electrons from cytochrome c in the IMS and 4 protons from the mitochondrial matrix. This chain is Cytochrome c oxidase subunit 2 (mt-co2), found in Cyprinus carpio (Common carp).